The primary structure comprises 162 residues: Interleukin-15 (162 aa).

The N-terminal stretch at 1-29 (MRISKPHLRITSIQCYVCLLLNTHFLTEA) is a signal peptide. The propeptide occupies 30-48 (GIRVFILGCISAGIPKTEA). Disulfide bonds link Cys-83–Cys-133 and Cys-90–Cys-136. 3 N-linked (GlcNAc...) asparagine glycosylation sites follow: Asn-119, Asn-127, and Asn-143.

This sequence belongs to the IL-15/IL-21 family.

It is found in the secreted. Functionally, cytokine that plays a major role in the development of inflammatory and protective immune responses to microbial invaders and parasites by modulating immune cells of both the innate and adaptive immune systems. Stimulates the proliferation of natural killer cells, T-cells and B-cells and promotes the secretion of several cytokines. In monocytes, induces the production of IL8 and monocyte chemotactic protein 1/CCL2, two chemokines that attract neutrophils and monocytes respectively to sites of infection. Unlike most cytokines, which are secreted in soluble form, IL15 is expressed in association with its high affinity IL15RA on the surface of IL15-producing cells and delivers signals to target cells that express IL2RB and IL2RG receptor subunits. Binding to its receptor triggers the phosphorylation of JAK1 and JAK3 and the recruitment and subsequent phosphorylation of signal transducer and activator of transcription-3/STAT3 and STAT5. In mast cells, induces the rapid tyrosine phosphorylation of STAT6 and thereby controls mast cell survival and release of cytokines such as IL4. The polypeptide is Interleukin-15 (IL15) (Marmota himalayana (Himalayan marmot)).